The chain runs to 253 residues: MATGRTHRPATRSRGIPEATVARLPLYLRALTALSERSVPTVSSEELATAAGVNSAKLRKDFSYLGSYGTRGVGYDVEYLVYQISRELGLTQDWPVAIVGIGNLGAALANYGGFASRGFRVAALIDADPAMAGTPVAGIAVQHTDDLDRIISDNGVSIGVITTPPGAAQQVCDRLVAAGVTSILNFAPTVLSVPEGVDVRKVDLSIELQILAFHEQRKAGEDSAAEDEGAPPMRATPASRKGPDGDMPAVMPA.

The H-T-H motif DNA-binding region spans 26–65; the sequence is LYLRALTALSERSVPTVSSEELATAAGVNSAKLRKDFSYL. 100–105 serves as a coordination point for NAD(+); it reads GIGNLG. Residues 217–253 form a disordered region; it reads RKAGEDSAAEDEGAPPMRATPASRKGPDGDMPAVMPA.

Belongs to the transcriptional regulatory Rex family. Homodimer.

The protein resides in the cytoplasm. Its function is as follows. Modulates transcription in response to changes in cellular NADH/NAD(+) redox state. The chain is Redox-sensing transcriptional repressor Rex from Streptomyces griseus subsp. griseus (strain JCM 4626 / CBS 651.72 / NBRC 13350 / KCC S-0626 / ISP 5235).